The chain runs to 1787 residues: ATP-dependent RNA helicase DEAH11, chloroplastic (1787 aa).

The transit peptide at M1–R33 directs the protein to the chloroplast. Positions M1–P75 are disordered. Residues Q20 to P60 are compositionally biased toward polar residues. The 165-residue stretch at L313–N477 folds into the Helicase ATP-binding domain. Residue G326 to S333 coordinates ATP. Residues D424–H427 carry the DEAH box motif. The Helicase C-terminal domain occupies D507–G673. The TRIAD supradomain stretch occupies residues I1557–I1764. Residues C1561, C1564, C1577, H1579, C1582, C1585, C1604, C1609, C1649, C1654, C1672, C1675, C1680, C1683, H1688, C1693, C1719, and C1722 each coordinate Zn(2+). The RING-type 1 zinc finger occupies C1561 to C1609. The IBR-type zinc finger occupies D1628–C1693. The segment at C1719 to C1747 adopts an RING-type 2; atypical zinc-finger fold. C1732 is an active-site residue. Positions 1737 and 1739 each coordinate Zn(2+).

This sequence belongs to the DEAD box helicase family. DEAH subfamily.

The protein resides in the plastid. It localises to the chloroplast. It carries out the reaction ATP + H2O = ADP + phosphate + H(+). This chain is ATP-dependent RNA helicase DEAH11, chloroplastic, found in Arabidopsis thaliana (Mouse-ear cress).